We begin with the raw amino-acid sequence, 598 residues long: Glutamine--fructose-6-phosphate aminotransferase [isomerizing] (598 aa).

The active-site Nucleophile; for GATase activity is Cys-2. The Glutamine amidotransferase type-2 domain maps to 2–218 (CGIVGYIGNN…DLSLGYASKD (217 aa)). SIS domains are found at residues 277–421 (VFDE…KRNL) and 450–588 (LSKR…VDMP). Residue Lys-593 is the For Fru-6P isomerization activity of the active site.

As to quaternary structure, homodimer.

The protein localises to the cytoplasm. It catalyses the reaction D-fructose 6-phosphate + L-glutamine = D-glucosamine 6-phosphate + L-glutamate. Its function is as follows. Catalyzes the first step in hexosamine metabolism, converting fructose-6P into glucosamine-6P using glutamine as a nitrogen source. This is Glutamine--fructose-6-phosphate aminotransferase [isomerizing] from Campylobacter jejuni subsp. jejuni serotype O:2 (strain ATCC 700819 / NCTC 11168).